The sequence spans 2753 residues: MARKKLKKFTTLEIVLSVLLLVLFIISIVLIVLLAKESLKSTAPDPGTTGTPDPGTTGTPDPGTTGTTHARTTGPPDPGTTGTTPVSAECPVVNELERINCIPDQPPTKATCDQRGCCWNPQGAVSVPWCYYSKNHSYHVEGNLVNTNAGFTARLKNLPSSPVFGSNVDNVLLTAEYQTSNRFHFKLTDQTNNRFEVPHEHVQSFSGNAAASLTYQVEISRQPFSIKVTRRSNNRVLFDSSIGPLLFADQFLQLSTRLPSTNVYGLGEHVHQQYRHDMNWKTWPIFNRDTTPNGNGTNLYGAQTFFLCLEDASGLSFGVFLMNSNAMEVVLQPAPAITYRTIGGILDFYVFLGNTPEQVVQEYLELIGRPALPSYWALGFHLSRYEYGTLDNMREVVERNRAAQLPYDVQHADIDYMDERRDFTYDSVDFKGFPEFVNELHNNGQKLVIIVDPAISNNSSSSKPYGPYDRGSDMKIWVNSSDGVTPLIGEVWPGQTVFPDYTNPNCAVWWTKEFELFHNQVEFDGIWIDMNEVSNFVDGSVSGCSTNNLNNPPFTPRILDGYLFCKTLCMDAVQHWGKQYDIHNLYGYSMAVATAEAAKTVFPNKRSFILTRSTFAGSGKFAAHWLGDNTATWDDLRWSIPGVLEFNLFGIPMVGPDICGFALDTPEELCRRWMQLGAFYPFSRNHNGQGYKDQDPASFGADSLLLNSSRHYLNIRYTLLPYLYTLFFRAHSRGDTVARPLLHEFYEDNSTWDVHQQFLWGPGLLITPVLDEGAEKVMAYVPDAVWYDYETGSQVRWRKQKVEMELPGDKIGLHLRGGYIFPTQQPNTTTLASRKNPLGLIIALDENKEAKGELFWDNGETKDTVANKVYLLCEFSVTQNRLEVNISQSTYKDPNNLAFNEIKILGTEEPSNVTVKHNGVPSQTSPTVTYDSNLKVAIITDIDLLLGEAYTVEWSIKIRDEEKIDCYPDENGASAENCTARGCIWEASNSSGVPFCYFVNDLYSVSDVQYNSHGATADISLKSSVYANAFPSTPVNPLRLDVTYHKNEMLQFKIYDPNKNRYEVPVPLNIPSMPSSTPEGQLYDVLIKKNPFGIEIRRKSTGTIIWDSQLLGFTFSDMFIRISTRLPSKYLYGFGETEHRSYRRDLEWHTWGMFSRDQPPGYKKNSYGVHPYYMGLEEDGSAHGVLLLNSNAMDVTFQPLPALTYRTTGGVLDFYVFLGPTPELVTQQYTELIGRPVMVPYWSLGFQLCRYGYQNDSEIASLYDEMVAAQIPYDVQYSDIDYMERQLDFTLSPKFAGFPALINRMKADGMRVILILDPAISGNETQPYPAFTRGVEDDVFIKYPNDGDIVWGKVWPDFPDVVVNGSLDWDSQVELYRAYVAFPDFFRNSTAKWWKREIEELYNNPQNPERSLKFDGMWIDMNEPSSFVNGAVSPGCRDASLNHPPYMPHLESRDRGLSSKTLCMESQQILPDGSLVQHYNVHNLYGWSQTRPTYEAVQEVTGQRGVVITRSTFPSSGRWAGHWLGDNTAAWDQLKKSIIGMMEFSLFGISYTGADICGFFQDAEYEMCVRWMQLGAFYPFSRNHNTIGTRRQDPVSWDAAFVNISRNVLQTRYTLLPYLYTLMQKAHTEGVTVVRPLLHEFVSDQVTWDIDSQFLLGPAFLVSPVLERNARNVTAYFPRARWYDYYTGVDINARGEWKTLPAPLDHINLHVRGGYILPWQEPALNTHLSRKNPLGLIIALDENKEAKGELFWDDGQTKDTVAKKVYLLCEFSVTQNHLEVTISQSTYKDPNNLAFNEIKILGMEEPSNVTVKHNGVPSQTSPTVTYDSNLKVAIITDINLFLGEAYTVEWSIKIRDEEKIDCYPDENGDSAENCTARGCIWEASNSSGVPFCYFVNDLYSVSDVQYNSHGATADISLKSSVHANAFPSTPVNPLRLDVTYHKNEMLQFKIYDPNNNRYEVPVPLNIPSVPSSTPEGQLYDVLIKKNPFGIEIRRKSTGTIIWDSQLLGFTFNDMFIRISTRLPSKYLYGFGETEHTSYRRDLEWHTWGMFSRDQPPGYKKNSYGVHPYYMGLEEDGSAHGVLLLNSNAMDVTFQPLPALTYRTTGGVLDFYVFLGPTPELVTQQYTELIGRPVMVPYWSLGFQLCRYGYQNDSEISSLYDEMVAAQIPYDVQYSDIDYMERQLDFTLSPKFAGFPALINRMKADGMRVILILDPAISGNETQPYPAFTRGVEDDVFIKYPNDGDIVWGKVWPDFPDVVVNGSLDWDSQVELYRAYVAFPDFFRNSTAKWWKREIEELYNNPQNPERSLKFDGMWIDMNEPSSFVNGAVSPGCRDASLNHPPYMPYLESRDRGLSSKTLCMESQQILPDGSPVQHYNVHNLYGWSQTRPTYEAVQEVTGQRGVVITRSTFPSSGRWAGHWLGDNTAAWDQLKKSIIGMMEFSLFGISYTGADICGFFQDAEYEMCVRWMQLGAFYPFSRNHNTIGTRRQDPVSWDVAFVNISRTVLQTRYTLLPYLYTLMHKAHTEGVTVVRPLLHEFVSDQVTWDIDSQFLLGPAFLVSPVLERNARNVTAYFPRARWYDYYTGVDINARGEWKTLPAPLDHINLHVRGGYILPWQEPALNTHLSRQKFMGFKIALDDEGTAGGWLFWDDGQSIDTYGKGLYYLASFSASQNTMQSHIIFNNYITGTNPLKLGYIEIWGVGSVPVTSVSISVSGMVITPSFNNDPTTQVLSIDVTDRNISLHNFTSLTWISTL.

Over 1–13 (MARKKLKKFTTLE) the chain is Cytoplasmic. Residues 14–34 (IVLSVLLLVLFIISIVLIVLL) traverse the membrane as a helical; Signal-anchor for type II membrane protein segment. Topologically, residues 35-2753 (AKESLKSTAP…FTSLTWISTL (2719 aa)) are lumenal. The segment at 41 to 87 (STAPDPGTTGTPDPGTTGTPDPGTTGTTHARTTGPPDPGTTGTTPVS) is disordered. The span at 44–85 (PDPGTTGTPDPGTTGTPDPGTTGTTHARTTGPPDPGTTGTTP) shows a compositional bias: low complexity. Positions 88-134 (AECPVVNELERINCIPDQPPTKATCDQRGCCWNPQGAVSVPWCYYSK) constitute a P-type 1 domain. 3 disulfide bridges follow: Cys90–Cys118, Cys101–Cys117, and Cys112–Cys130. Asn135 carries N-linked (GlcNAc...) asparagine glycosylation. Asp289 provides a ligand contact to acarbose. Asn295 carries N-linked (GlcNAc...) asparagine glycosylation. A maltase region spans residues 356 to 737 (PEQVVQEYLE…FRAHSRGDTV (382 aa)). Asp413 serves as a coordination point for acarbose. Sulfotyrosine occurs at positions 416 and 425. N-linked (GlcNAc...) asparagine glycosylation is found at Asn457, Asn458, and Asn479. The Nucleophile role is filled by Asp529. Glu532 is an active-site residue. Residues Arg612 and Asp628 each contribute to the acarbose site. A disulfide bridge connects residues Cys659 and Cys670. Residue His686 participates in acarbose binding. Asn707, Asn749, Asn827, Asn885, Asn912, Asn977, Asn989, and Asn1255 each carry an N-linked (GlcNAc...) asparagine glycan. Positions 954–1000 (WSIKIRDEEKIDCYPDENGASAENCTARGCIWEASNSSGVPFCYFVN) constitute a P-type 2 domain. 2 disulfide bridges follow: Cys966–Cys983 and Cys978–Cys996. Residues 1221-1632 (TPELVTQQYT…MQKAHTEGVT (412 aa)) form a glucoamylase region. Tyr1282 carries the post-translational modification Sulfotyrosine. Asn1323, Asn1364, and Asn1388 each carry an N-linked (GlcNAc...) asparagine glycan. Asp1420 acts as the Nucleophile in catalysis. The active site involves Glu1423. Asp1526 (proton donor) is an active-site residue. The P-type 3 domain maps to 1850-1896 (WSIKIRDEEKIDCYPDENGDSAENCTARGCIWEASNSSGVPFCYFVN). Disulfide bonds link Cys1862–Cys1879 and Cys1874–Cys1892. N-linked (GlcNAc...) asparagine glycosylation is found at Asn2499, Asn2568, Asn2738, and Asn2743.

It belongs to the glycosyl hydrolase 31 family. In terms of assembly, monomer. In terms of processing, N- and O-glycosylated. Does not undergo intracellular or extracellular proteolytic cleavage. Post-translationally, sulfated. In terms of tissue distribution, broadly expressed. Highly expressed in small intestine. Expressed in granulocytes.

The protein localises to the apical cell membrane. The enzyme catalyses Hydrolysis of terminal, non-reducing (1-&gt;4)-linked alpha-D-glucose residues with release of alpha-D-glucose.. It carries out the reaction D-maltoheptaose + H2O = D-maltohexaose + alpha-D-glucose. The catalysed reaction is D-maltohexaose + H2O = D-maltopentaose + alpha-D-glucose. It catalyses the reaction D-maltopentaose + H2O = D-maltotetraose + alpha-D-glucose. The enzyme catalyses D-maltotetraose + H2O = D-maltotriose + alpha-D-glucose. It carries out the reaction D-maltotriose + H2O = D-maltose + alpha-D-glucose. The catalysed reaction is D-maltose + H2O = alpha-D-glucose + D-glucose. It catalyses the reaction nigerose + H2O = alpha-D-glucose + D-glucose. The enzyme catalyses kojibiose + H2O = alpha-D-glucose + D-glucose. It carries out the reaction isomaltose + H2O = alpha-D-glucose + D-glucose. The catalysed reaction is 6-O-alpha-D-glucopyranosyl-D-fructose + H2O = alpha-D-glucose + D-fructose. It participates in carbohydrate degradation. With respect to regulation, down-regulated at high oligomaltose concentration as it occurs during the mealtime. Down-regulated by anti-diabetic drug acarbose. Functionally, alpha-(1,4) exo-glucosidase involved in breakdown of dietary starch oligosaccharides in small intestine. Cleaves the non-reducing alpha-(1,4)-linked glucose residue in linear dextrins with retention of anomeric center stereochemistry. Mainly hydrolyzes short length oligomaltoses having two to seven glucose residues. Can cleave alpha-(1,2), alpha-(1,3) and alpha-(1,6) glycosidic linkages with lower efficiency, whereas beta glycosidic linkages are usually not hydrolyzed. This Homo sapiens (Human) protein is Maltase-glucoamylase.